Consider the following 985-residue polypeptide: UPF0182 protein cgR_0895 (985 aa).

The next 7 helical transmembrane spans lie at 19-39 (VTWI…SVGF), 63-83 (IVLF…AGYF), 115-135 (VMVL…QRSW), 176-196 (SMML…MGGI), 215-235 (TQLA…YWLD), 262-282 (KIIL…AIFL), and 290-310 (LAVV…PLML). The tract at residues 906–944 (AQDIEEVDGTTTTPSTDETDTDTDQPATETPTAPVSEAE) is disordered. The segment covering 929–939 (DQPATETPTAP) has biased composition (low complexity).

Belongs to the UPF0182 family.

The protein resides in the cell membrane. The polypeptide is UPF0182 protein cgR_0895 (Corynebacterium glutamicum (strain R)).